Here is a 278-residue protein sequence, read N- to C-terminus: 4-diphosphocytidyl-2-C-methyl-D-erythritol kinase (278 aa).

The active site involves K9. 93–103 (PISAGLAGGSS) contacts ATP. D135 is a catalytic residue.

It belongs to the GHMP kinase family. IspE subfamily.

It catalyses the reaction 4-CDP-2-C-methyl-D-erythritol + ATP = 4-CDP-2-C-methyl-D-erythritol 2-phosphate + ADP + H(+). Its pathway is isoprenoid biosynthesis; isopentenyl diphosphate biosynthesis via DXP pathway; isopentenyl diphosphate from 1-deoxy-D-xylulose 5-phosphate: step 3/6. In terms of biological role, catalyzes the phosphorylation of the position 2 hydroxy group of 4-diphosphocytidyl-2C-methyl-D-erythritol. This Finegoldia magna (strain ATCC 29328 / DSM 20472 / WAL 2508) (Peptostreptococcus magnus) protein is 4-diphosphocytidyl-2-C-methyl-D-erythritol kinase.